The chain runs to 130 residues: MVMLDVLSNALMSVKNAESRGDRQVIIWPSSKLIGNVLRVMQRYGYVGEFEYVYDGRGGKYVVQLLGRINDIGAIKPRFHVKVDELQKWEEKYLPARQVGILILTTSKGVVSHLEARENRVGGILVAYVY.

It belongs to the universal ribosomal protein uS8 family. As to quaternary structure, part of the 30S ribosomal subunit.

In terms of biological role, one of the primary rRNA binding proteins, it binds directly to 16S rRNA central domain where it helps coordinate assembly of the platform of the 30S subunit. This is Small ribosomal subunit protein uS8 from Caldivirga maquilingensis (strain ATCC 700844 / DSM 13496 / JCM 10307 / IC-167).